The chain runs to 244 residues: uncharacterized protein (244 aa).

In terms of domain architecture, FCP1 homology spans 19 to 196 (ATDNRKLVIL…ACVIRYLKHL (178 aa)).

This is an uncharacterized protein from Schizosaccharomyces pombe (strain 972 / ATCC 24843) (Fission yeast).